Consider the following 449-residue polypeptide: MKITVHSSKAVKPVYGDAVAAPSTADVVPLSVFDRANFDTYVSVIYAFRPPAPANSVLEAGLAKALAEYREWAGRLGVDGDGDRAILLNDAGARFVEATADVTLDSVVPLEPTPRVTSLHPSADDDGAEAEVMMVQVTRFACGSLAVGFTAHHMVSDGRATSNFFLAWSQATRGVAIHPVPVHDRASFFTPRDPPRVDYEHRGVEFKTCEKLDRNENNDDGHGHGHDGEVVVTHKVHFSREFISKLKALASAGGGQRSYSTLQCVVAHLWRCITMARGLEGSVATSVSIAVDGRARMSPPVLDGYTGNVVLWARPTATARELVTMPLQHAMGLINRAVARINDGYFKSFVDFANSGAVEEERLVASADAAEMVLSPNIEVDSWLRIPFYELDFGSGQPFLFTPSYLPVEGLLILLPSFSGDGSVDAYVPLFSHDMDTFKNCCYVLPELS.

Residues H153 and D392 each act as proton acceptor in the active site.

It belongs to the plant acyltransferase family. As to expression, highly expressed in roots. Expressed at low levels in flowers.

Its function is as follows. Hydroxycinnamoyl transferase that catalyzes the transfer of an acyl from p-coumaryol-CoA to agmatine, to produce coumaroyl agmatine. Can use feruloyl-CoA, caffeoyl-CoA and sinapoyl-CoA as acyl donors. Seems to be able to transfer the acyl group from p-coumaroyl-CoA and feruloyl-CoA to the acyl acceptors putrescine and spermidine. This is Agmatine hydroxycinnamoyltransferase 1 from Oryza sativa subsp. japonica (Rice).